The sequence spans 77 residues: Acyl carrier protein (77 aa).

A Carrier domain is found at 2–77 (ADVLERVTKI…DAVNYIKSRL (76 aa)). Ser-37 bears the O-(pantetheine 4'-phosphoryl)serine mark.

It belongs to the acyl carrier protein (ACP) family. 4'-phosphopantetheine is transferred from CoA to a specific serine of apo-ACP by AcpS. This modification is essential for activity because fatty acids are bound in thioester linkage to the sulfhydryl of the prosthetic group.

The protein localises to the cytoplasm. Its pathway is lipid metabolism; fatty acid biosynthesis. Functionally, carrier of the growing fatty acid chain in fatty acid biosynthesis. This is Acyl carrier protein from Geobacillus kaustophilus (strain HTA426).